A 385-amino-acid chain; its full sequence is MNSLDLPKPPHETRVVVAMSGGVDSSVVAGLLKREGYDVVGVTLQLYDHGAATHRKGACCAGRDIHDARAVAETLGIPHYVLDYEDRFRESVIDRFAESYLSGETPIPCVECNRSVKFRDLLGMARDLGAEALATGHYVASRAQPEGGRALYRALDPARDQSYFLYATTPEQLAFLRFPLGERPKDETRALARELGLAVADKADSQDICFVPQGGYADVIAKLRPEAARPGEIVDLDGRRLGEHEGIIHYTVGQRRGLKLSVGEPLYVVRLEPETARVVVGPRAALATRRIRLTDLNWLGSRAPDGLADLPVAVRVRSTREPRPARLSWNAAEACLEVELVVPEDGVSPGQACVIYADDGPRAQVLGGGTIRRIGALQAGAAEAA.

ATP is bound by residues 18-25 and L44; that span reads AMSGGVDS. Catalysis depends on C112, which acts as the Nucleophile. C112 and C209 are oxidised to a cystine. G136 contributes to the ATP binding site. An interaction with tRNA region spans residues 159–161; that stretch reads RDQ. Residue C209 is the Cysteine persulfide intermediate of the active site.

It belongs to the MnmA/TRMU family.

The protein resides in the cytoplasm. The catalysed reaction is S-sulfanyl-L-cysteinyl-[protein] + uridine(34) in tRNA + AH2 + ATP = 2-thiouridine(34) in tRNA + L-cysteinyl-[protein] + A + AMP + diphosphate + H(+). Catalyzes the 2-thiolation of uridine at the wobble position (U34) of tRNA, leading to the formation of s(2)U34. This Methylorubrum populi (strain ATCC BAA-705 / NCIMB 13946 / BJ001) (Methylobacterium populi) protein is tRNA-specific 2-thiouridylase MnmA.